We begin with the raw amino-acid sequence, 1081 residues long: Psi-producing oxygenase A (1081 aa).

Positions 105–446 (TKSFLNMLWN…DGAFNDDDLV (342 aa)) are linoleate 8R-lipoxygenase. A heme b-binding site is contributed by H202. The active site involves Y374. H377 contacts heme b. The tract at residues 654 to 1081 (IFISSHAACM…GELPQLKEDF (428 aa)) is 9,12-octadecadienoate 8-hydroperoxide 8R-isomerase.

The protein belongs to the peroxidase family. Homotetramer. It depends on heme b as a cofactor.

It catalyses the reaction (9Z,12Z)-octadecadienoate + O2 = (8R,9Z,12Z)-8-hydroperoxyoctadeca-9,12-dienoate. The enzyme catalyses (8R,9Z,12Z)-8-hydroperoxyoctadeca-9,12-dienoate = (5S,8R,9Z,12Z)-5,8-dihydroxyoctadeca-9,12-dienoate. In terms of biological role, bifunctional heme-containing enzyme that oxidizes linoleic acid to (8R,9Z,12Z)-8-hydroperoxyoctadeca-9,12-dienoate (within the N-terminal heme peroxidase domain), which is subsequently isomerized to (5S,8R,9Z,12Z)-5,8-dihydroxyoctadeca-9,12-dienoate (within the C-terminal P450 heme thiolate domain). Oxidized unsaturated fatty acids, so-called oxylipins, derived from endogenous fatty acids, influence the development of the asexual conidiophores and sexual cleistothecia and regulate the secondary metabolism. These substances were collectively named psi factors and are primarily a mixture of hydroxylated oleic, linoleic and alpha-linolenic acids. They are termed psi-beta, psi-alpha, and psi-gamma, respectively. This is Psi-producing oxygenase A (ppoA) from Emericella nidulans (Aspergillus nidulans).